Here is a 308-residue protein sequence, read N- to C-terminus: MSTTTTESANPSLAAQEKIEVDFTPKEHYGDWRDEFHREGCIIIRNAVSPERAQYYVDKQIEWLKNFELGFDEKDESTWTAEHLPVSFRGGKYYYGVAHEKSVWEARTEPGVMDAFAKLWETDELLCSFDGIKIDLPRRKDVKWTPWPHCDHNPDVKGLSCVQGMLNFAPNGPNDGGLIWMKGSAKVFNEFFAEQRKNEDAENFDHKHQEFFKFHEDHMKWFEDRGYAFTKLELGPGDLVLWDSRTVHHSCFAAGDQIRHAQYICMMPKRFATEKALETKKYCFEHYLPNTHLPHRWVTQIVHHCEES.

Its pathway is secondary metabolite biosynthesis. Part of the cluster that mediates the biosynthesis of a highly modified cyclo-arginine-tryptophan dipeptide (cRW). The first step of the pathway is perfornmed by the arginine-containing cyclodipeptide synthase (RCPDS) avaA that acts as the scaffold-generating enzyme and is responsible for formation of the cyclo-Arg-Trp (cRW) diketopiperazine. AvaB then acts as a multifunctional flavoenzyme that is responsible for generating the cyclo-Arg-formylkynurenine DKP, which can be deformylated by avaC. AvaB then further catalyzes an additional N-oxidation followed by cyclization and dehydration. The next step is an N-acetylation of the guanidine group catalyzed by the arginine N-acetyltransferase avaD. The roles of the additional enzymes identified within the ava cluster still have to be determined. The protein is Ava biosynthesis cluster protein O of Aspergillus versicolor.